A 168-amino-acid chain; its full sequence is Lipoprotein signal peptidase (168 aa).

A run of 3 helical transmembrane segments spans residues 12 to 32, 67 to 87, and 93 to 113; these read WYWV…WVLA, WQRW…TIWL, and NMVR…GNLI. Catalysis depends on residues aspartate 123 and aspartate 141. The helical transmembrane segment at 136–156 threads the bilayer; it reads AFNIADAAIFIGAVLIIIDSF.

The protein belongs to the peptidase A8 family.

Its subcellular location is the cell inner membrane. The enzyme catalyses Release of signal peptides from bacterial membrane prolipoproteins. Hydrolyzes -Xaa-Yaa-Zaa-|-(S,diacylglyceryl)Cys-, in which Xaa is hydrophobic (preferably Leu), and Yaa (Ala or Ser) and Zaa (Gly or Ala) have small, neutral side chains.. Its pathway is protein modification; lipoprotein biosynthesis (signal peptide cleavage). This protein specifically catalyzes the removal of signal peptides from prolipoproteins. The sequence is that of Lipoprotein signal peptidase from Shewanella amazonensis (strain ATCC BAA-1098 / SB2B).